The sequence spans 179 residues: NADH dehydrogenase [ubiquinone] 1 beta subcomplex subunit 9 (179 aa).

A2 carries the post-translational modification N-acetylalanine. S85 is modified (phosphoserine). The segment at 139–160 (QLQEETPVGGPRTEALPPARKQ) is disordered.

The protein belongs to the complex I LYR family. As to quaternary structure, mammalian complex I is composed of 45 different subunits.

The protein localises to the mitochondrion inner membrane. Its function is as follows. Accessory subunit of the mitochondrial membrane respiratory chain NADH dehydrogenase (Complex I), that is believed to be not involved in catalysis. Complex I functions in the transfer of electrons from NADH to the respiratory chain. The immediate electron acceptor for the enzyme is believed to be ubiquinone. The protein is NADH dehydrogenase [ubiquinone] 1 beta subcomplex subunit 9 (NDUFB9) of Bos taurus (Bovine).